A 622-amino-acid polypeptide reads, in one-letter code: tRNA uridine 5-carboxymethylaminomethyl modification enzyme MnmG (622 aa).

Residue 10 to 15 participates in FAD binding; sequence GGGHAG. 269–283 is an NAD(+) binding site; sequence GPRYCPSVEDKIVKF.

The protein belongs to the MnmG family. Homodimer. Heterotetramer of two MnmE and two MnmG subunits. It depends on FAD as a cofactor.

It localises to the cytoplasm. In terms of biological role, NAD-binding protein involved in the addition of a carboxymethylaminomethyl (cmnm) group at the wobble position (U34) of certain tRNAs, forming tRNA-cmnm(5)s(2)U34. The protein is tRNA uridine 5-carboxymethylaminomethyl modification enzyme MnmG of Bartonella quintana (strain Toulouse) (Rochalimaea quintana).